The primary structure comprises 467 residues: Hydroxyacid-oxoacid transhydrogenase, mitochondrial (467 aa).

Lys-445 carries the N6-acetyllysine modification. Phosphoserine is present on Ser-452.

It belongs to the iron-containing alcohol dehydrogenase family. Hydroxyacid-oxoacid transhydrogenase subfamily. As to expression, expressed in kidney and liver.

Its subcellular location is the mitochondrion. The enzyme catalyses (S)-3-hydroxybutanoate + 2-oxoglutarate = (R)-2-hydroxyglutarate + acetoacetate. The catalysed reaction is 4-hydroxybutanoate + 2-oxoglutarate = (R)-2-hydroxyglutarate + succinate semialdehyde. Catalyzes the cofactor-independent reversible oxidation of gamma-hydroxybutyrate (GHB) to succinic semialdehyde (SSA) coupled to reduction of 2-ketoglutarate (2-KG) to D-2-hydroxyglutarate (D-2-HG). L-3-hydroxybutyrate (L-3-OHB) is also a substrate for HOT when using 2-KG as hydrogen acceptor, resulting in the formation of D-2-HG. In Rattus norvegicus (Rat), this protein is Hydroxyacid-oxoacid transhydrogenase, mitochondrial (Adhfe1).